We begin with the raw amino-acid sequence, 462 residues long: Metal cation symporter ZIP14 (462 aa).

The N-terminal stretch at 1 to 16 (MPLLLLSALLPFSLMA) is a signal peptide. Topologically, residues 17 to 138 (GPTPSTGKEL…PSPGEVWGYG (122 aa)) are extracellular. 4 N-linked (GlcNAc...) asparagine glycosylation sites follow: Asn42, Asn68, Asn83, and Asn119. Residues 139-159 (FLCVTVISLCSLFGAGVVPFM) form a helical membrane-spanning segment. Residues 160–167 (KKACYKRL) are Cytoplasmic-facing. Residues 168–188 (LLFCIALAIGTLFSNALFQLI) traverse the membrane as a helical segment. Over 189-201 (PEAFGFNPLEDSY) the chain is Extracellular. Residues 202–222 (VFTSSVIFGGFYLFFFTEKVL) form a helical membrane-spanning segment. Residues 223–322 (KMMLKQKHEH…SDGLHNFIDG (100 aa)) lie on the Cytoplasmic side of the membrane. Residues 230-237 (HEHGHSHY) carry the HHHGHXHX-motif motif. The disordered stretch occupies residues 235-285 (SHYSADTSKRDAEEGVTEKLQNGDLDHMIPPPHGSESDLRGDEKAVQQQDL). Basic and acidic residues-rich tracts occupy residues 241–251 (TSKRDAEEGVT) and 269–279 (SESDLRGDEKA). A helical membrane pass occupies residues 323 to 343 (LAIGASFTVSVFQGVSTSIAI). Over 344–367 (LCEEFPHELGDFVILLNAGMSIPQ) the chain is Extracellular. The short motif at 346-351 (EEFPHE) is the XEXPHE-motif element. A helical membrane pass occupies residues 368–388 (ALFFNFLSACCCYLGLAFGIL). The Cytoplasmic segment spans residues 389-396 (AGSHFSSN). Residues 397-417 (WIFALAGGMFLYIALSDMFPE) traverse the membrane as a helical segment. Residues 418-431 (MNEVSKEDEEGGRA) are Extracellular-facing. A helical transmembrane segment spans residues 432-452 (FSAFMIQNAGLLTGFAIMLLL). At 453–462 (TTFSGQIQLG) the chain is on the cytoplasmic side.

It belongs to the ZIP transporter (TC 2.A.5) family. Homotrimer.

Its subcellular location is the cell membrane. The protein resides in the apical cell membrane. The protein localises to the basolateral cell membrane. It localises to the early endosome membrane. It is found in the late endosome membrane. Its subcellular location is the lysosome membrane. The enzyme catalyses Zn(2+)(out) + 2 hydrogencarbonate(out) = Zn(2+)(in) + 2 hydrogencarbonate(in). It catalyses the reaction Mn(2+)(out) + 2 hydrogencarbonate(out) = Mn(2+)(in) + 2 hydrogencarbonate(in). It carries out the reaction Fe(2+)(out) + 2 hydrogencarbonate(out) = Fe(2+)(in) + 2 hydrogencarbonate(in). The catalysed reaction is Cd(2+)(out) + 2 hydrogencarbonate(out) = Cd(2+)(in) + 2 hydrogencarbonate(in). Functionally, electroneutral transporter of the plasma membrane mediating the cellular uptake of the divalent metal cations zinc, manganese and iron that are important for tissue homeostasis, metabolism, development and immunity. Functions as an energy-dependent symporter, transporting through the membranes an electroneutral complex composed of a divalent metal cation and two bicarbonate anions. Beside these endogenous cellular substrates, can also import cadmium a non-essential metal which is cytotoxic and carcinogenic. This chain is Metal cation symporter ZIP14, found in Xenopus tropicalis (Western clawed frog).